Consider the following 435-residue polypeptide: Serine--tRNA ligase (435 aa).

238-240 is a binding site for L-serine; the sequence is TAE. 269-271 contributes to the ATP binding site; sequence RKE. E292 serves as a coordination point for L-serine. 356 to 359 provides a ligand contact to ATP; that stretch reads EISS. Residue S391 participates in L-serine binding.

This sequence belongs to the class-II aminoacyl-tRNA synthetase family. Type-1 seryl-tRNA synthetase subfamily. As to quaternary structure, homodimer. The tRNA molecule binds across the dimer.

It is found in the cytoplasm. The enzyme catalyses tRNA(Ser) + L-serine + ATP = L-seryl-tRNA(Ser) + AMP + diphosphate + H(+). It catalyses the reaction tRNA(Sec) + L-serine + ATP = L-seryl-tRNA(Sec) + AMP + diphosphate + H(+). It participates in aminoacyl-tRNA biosynthesis; selenocysteinyl-tRNA(Sec) biosynthesis; L-seryl-tRNA(Sec) from L-serine and tRNA(Sec): step 1/1. Its function is as follows. Catalyzes the attachment of serine to tRNA(Ser). Is also able to aminoacylate tRNA(Sec) with serine, to form the misacylated tRNA L-seryl-tRNA(Sec), which will be further converted into selenocysteinyl-tRNA(Sec). This Leuconostoc mesenteroides subsp. mesenteroides (strain ATCC 8293 / DSM 20343 / BCRC 11652 / CCM 1803 / JCM 6124 / NCDO 523 / NBRC 100496 / NCIMB 8023 / NCTC 12954 / NRRL B-1118 / 37Y) protein is Serine--tRNA ligase.